The chain runs to 432 residues: Glutamyl-tRNA reductase (432 aa).

Substrate is bound by residues 49 to 52 (TCNR), S109, 114 to 116 (EGQ), and Q120. Residue C50 is the Nucleophile of the active site. 198–203 (GAGRMS) serves as a coordination point for NADP(+).

This sequence belongs to the glutamyl-tRNA reductase family. In terms of assembly, homodimer.

It catalyses the reaction (S)-4-amino-5-oxopentanoate + tRNA(Glu) + NADP(+) = L-glutamyl-tRNA(Glu) + NADPH + H(+). It functions in the pathway porphyrin-containing compound metabolism; protoporphyrin-IX biosynthesis; 5-aminolevulinate from L-glutamyl-tRNA(Glu): step 1/2. It participates in porphyrin-containing compound metabolism; chlorophyll biosynthesis. Catalyzes the NADPH-dependent reduction of glutamyl-tRNA(Glu) to glutamate 1-semialdehyde (GSA). This Parasynechococcus marenigrum (strain WH8102) protein is Glutamyl-tRNA reductase.